The following is a 60-amino-acid chain: Sperm protamine P1 (60 aa).

Residues 1-60 (MARYRHSRSRSRSRYRRRRRRRSRYRSQRRRYRGRRRRRSRRGRRRGYSRRRYSRRRRRY) are disordered.

Belongs to the protamine P1 family. Testis.

It is found in the nucleus. Its subcellular location is the chromosome. Its function is as follows. Protamines substitute for histones in the chromatin of sperm during the haploid phase of spermatogenesis. They compact sperm DNA into a highly condensed, stable and inactive complex. The protein is Sperm protamine P1 (PRM1) of Osphranter rufus (Red kangaroo).